Reading from the N-terminus, the 630-residue chain is Threonine--tRNA ligase (630 aa).

The interval 1–137 is editing domain; the sequence is MKVLLIHSDY…PLSELSRKIT (137 aa). The segment at 207–506 is catalytic; it reads PHVKFITEKE…ADAGAPPMLP (300 aa). Cysteine 299, histidine 351, and histidine 475 together coordinate Zn(2+).

This sequence belongs to the class-II aminoacyl-tRNA synthetase family. As to quaternary structure, homodimer. Zn(2+) is required as a cofactor.

The protein resides in the cytoplasm. The catalysed reaction is tRNA(Thr) + L-threonine + ATP = L-threonyl-tRNA(Thr) + AMP + diphosphate + H(+). Catalyzes the attachment of threonine to tRNA(Thr) in a two-step reaction: L-threonine is first activated by ATP to form Thr-AMP and then transferred to the acceptor end of tRNA(Thr). Also edits incorrectly charged L-seryl-tRNA(Thr). This chain is Threonine--tRNA ligase, found in Methanococcus aeolicus (strain ATCC BAA-1280 / DSM 17508 / OCM 812 / Nankai-3).